Reading from the N-terminus, the 234-residue chain is MEFTPPLQQGILLRRYKRFLADVQLSDGSEITLHCPNTGSMRNCLYPGETVWFSTSDNPKRKYAHTWELMTTPNAGLIGIHSGQANTLAEEAINKGIITELTGYDSLSREVKYGDENSRIDILLQGAQKPACYIEVKSCTLLEDGQGYFPDAVSLRGQKHLRELMHMVSQGHRAVLLFVVQHSEIFSVAPAAHIDPEYAKLLKIAVLAGVEVLAYRCEMSPTEIHLAQACDVRV.

This sequence belongs to the SfsA family.

This Shewanella baltica (strain OS195) protein is Sugar fermentation stimulation protein homolog.